The chain runs to 64 residues: Neuropeptide-like 4 (64 aa).

Residues 1–18 form the signal peptide; sequence MFKLLVVVFAALFAAALA. Propeptides lie at residues 19-40 and 63-64; these read VPAP…EPAP and YG.

The protein localises to the secreted. In Drosophila melanogaster (Fruit fly), this protein is Neuropeptide-like 4 (Nplp4).